A 24-amino-acid chain; its full sequence is Brevinin-1Bf (24 aa).

The cysteines at positions 18 and 24 are disulfide-linked.

Expressed by the skin glands.

It is found in the secreted. Antibacterial activity against Gram-positive bacterium S.aureus and Gram-negative bacterium E.coli. This chain is Brevinin-1Bf, found in Lithobates berlandieri (Rio Grande leopard frog).